Consider the following 2148-residue polypeptide: Polyketide synthase 1 (2148 aa).

The segment at 19–261 (FIFGDQSSCN…TPLAVHAPYH (243 aa)) is N-terminal acylcarrier protein transacylase domain (SAT). The Ketosynthase family 3 (KS3) domain maps to 394–829 (DSKIAIIGMS…GGNTALLVED (436 aa)). Active-site for beta-ketoacyl synthase activity residues include cysteine 566, histidine 701, and histidine 745. Positions 929–1233 (AFVFSGQGSQ…PSLMRNKDGW (305 aa)) are malonyl-CoA:ACP transacylase (MAT) domain. Catalysis depends on serine 1018, which acts as the For acyl/malonyl transferase activity. The segment at 1310–1624 (TASVHRIVHE…RKVLNTAMPP (315 aa)) is product template (PT) domain. The N-terminal hotdog fold stretch occupies residues 1314–1447 (HRIVHESVDK…SSLHFEQPKV (134 aa)). Residues 1314-1619 (HRIVHESVDK…FQGIPRKVLN (306 aa)) enclose the PKS/mFAS DH domain. Histidine 1346 serves as the catalytic Proton acceptor; for dehydratase activity. The tract at residues 1474-1619 (LNSRMSSGVI…FQGIPRKVLN (146 aa)) is C-terminal hotdog fold. Aspartate 1533 serves as the catalytic Proton donor; for dehydratase activity. Residues 1619–1655 (NTAMPPPKSQNEAQVHSSPAKSRPKPPGSASSVHSGR) form a disordered region. Polar residues predominate over residues 1627-1638 (SQNEAQVHSSPA). In terms of domain architecture, Carrier 1 spans 1678 to 1752 (RDPMQALFKI…DLATHLGFDT (75 aa)). O-(pantetheine 4'-phosphoryl)serine is present on serine 1712. Low complexity predominate over residues 1756–1769 (DQSSGQSSSCGGLS). Residues 1756–1796 (DQSSGQSSSCGGLSPRSDSTGEITSNATTPPSLSPRGSVSG) form a disordered region. Residues 1771-1796 (RSDSTGEITSNATTPPSLSPRGSVSG) are compositionally biased toward polar residues. The Carrier 2 domain occupies 1793–1870 (SVSGSQCKDV…SFKHMFQQGH (78 aa)). Residue serine 1830 is modified to O-(pantetheine 4'-phosphoryl)serine. The thioesterase (TE) domain stretch occupies residues 1882–2146 (LKQYRATSTL…ERVAAFIRST (265 aa)). Serine 1973 (for thioesterase activity) is an active-site residue.

Its function is as follows. Polyketide synthase; part of the Pks1 gene cluster that mediates the biosynthesis of an anthraquinone derivative pigment that contributes to conidial pigmentation that provides protection from UV radiation, heat and cold stress. The polyketide synthase Pks1 produces 1-acetyl-2,4,6,8-tetrahydroxy-9,10-anthraquinone though condensation of acetyl-CoA with malonyl-CoA. The dehydratase EthD and the laccase Mlac1 further convert the anthraquinone derivative into the final conidial pigment. The polypeptide is Polyketide synthase 1 (Metarhizium acridum (strain CQMa 102)).